Here is a 258-residue protein sequence, read N- to C-terminus: Acyl-[acyl-carrier-protein]--UDP-N-acetylglucosamine O-acyltransferase (258 aa).

The protein belongs to the transferase hexapeptide repeat family. LpxA subfamily. As to quaternary structure, homotrimer.

It is found in the cytoplasm. The enzyme catalyses a (3R)-hydroxyacyl-[ACP] + UDP-N-acetyl-alpha-D-glucosamine = a UDP-3-O-[(3R)-3-hydroxyacyl]-N-acetyl-alpha-D-glucosamine + holo-[ACP]. It participates in glycolipid biosynthesis; lipid IV(A) biosynthesis; lipid IV(A) from (3R)-3-hydroxytetradecanoyl-[acyl-carrier-protein] and UDP-N-acetyl-alpha-D-glucosamine: step 1/6. In terms of biological role, involved in the biosynthesis of lipid A, a phosphorylated glycolipid that anchors the lipopolysaccharide to the outer membrane of the cell. The protein is Acyl-[acyl-carrier-protein]--UDP-N-acetylglucosamine O-acyltransferase of Pseudomonas putida (strain ATCC 47054 / DSM 6125 / CFBP 8728 / NCIMB 11950 / KT2440).